Here is a 484-residue protein sequence, read N- to C-terminus: Fumarate hydratase class II (484 aa).

Positions 1–22 are disordered; sequence MPSILDLPIGTGATGKRKESDS. Residues 110–112, 141–144, 151–153, and threonine 199 contribute to the substrate site; these read SGT, HPND, and SSN. Histidine 200 (proton donor/acceptor) is an active-site residue. Serine 330 is an active-site residue. Substrate is bound by residues serine 331 and 336-338; that span reads KVN.

The protein belongs to the class-II fumarase/aspartase family. Fumarase subfamily. Homotetramer.

Its subcellular location is the cytoplasm. It catalyses the reaction (S)-malate = fumarate + H2O. The protein operates within carbohydrate metabolism; tricarboxylic acid cycle; (S)-malate from fumarate: step 1/1. Involved in the TCA cycle. Catalyzes the stereospecific interconversion of fumarate to L-malate. The polypeptide is Fumarate hydratase class II (Methanosarcina acetivorans (strain ATCC 35395 / DSM 2834 / JCM 12185 / C2A)).